We begin with the raw amino-acid sequence, 395 residues long: Putative 8-amino-7-oxononanoate synthase (395 aa).

R23 serves as a coordination point for substrate. 110 to 111 (GY) contributes to the pyridoxal 5'-phosphate binding site. A substrate-binding site is contributed by H135. Pyridoxal 5'-phosphate-binding positions include S182, 207 to 210 (DEAH), and 239 to 242 (TFSK). The residue at position 242 (K242) is an N6-(pyridoxal phosphate)lysine. Substrate is bound at residue T356.

The protein belongs to the class-II pyridoxal-phosphate-dependent aminotransferase family. BioF subfamily. Homodimer. Requires pyridoxal 5'-phosphate as cofactor.

It catalyses the reaction 6-carboxyhexanoyl-[ACP] + L-alanine + H(+) = (8S)-8-amino-7-oxononanoate + holo-[ACP] + CO2. Its pathway is cofactor biosynthesis; biotin biosynthesis. Functionally, catalyzes the decarboxylative condensation of pimeloyl-[acyl-carrier protein] and L-alanine to produce 8-amino-7-oxononanoate (AON), [acyl-carrier protein], and carbon dioxide. The polypeptide is Putative 8-amino-7-oxononanoate synthase (bioF) (Bacillus cereus (strain ZK / E33L)).